The primary structure comprises 774 residues: Fatty acid oxidation complex subunit alpha (774 aa).

2 disordered regions span residues M1–S31 and Y617–F641. Residues M1–P224 form an enoyl-CoA hydratase region. Composition is skewed to polar residues over residues T8–S31 and S620–K637. Residues R340–S774 form a 3-hydroxyacyl-CoA dehydrogenase region.

The protein in the N-terminal section; belongs to the enoyl-CoA hydratase/isomerase family. It in the central section; belongs to the 3-hydroxyacyl-CoA dehydrogenase family. As to quaternary structure, heterotetramer of two alpha chains (FadJ) and two beta chains (FadI).

It localises to the cytoplasm. It carries out the reaction a (3S)-3-hydroxyacyl-CoA = a (2E)-enoyl-CoA + H2O. The enzyme catalyses a 4-saturated-(3S)-3-hydroxyacyl-CoA = a (3E)-enoyl-CoA + H2O. It catalyses the reaction a (3S)-3-hydroxyacyl-CoA + NAD(+) = a 3-oxoacyl-CoA + NADH + H(+). The catalysed reaction is (3S)-3-hydroxybutanoyl-CoA = (3R)-3-hydroxybutanoyl-CoA. Its pathway is lipid metabolism; fatty acid beta-oxidation. Functionally, catalyzes the formation of a hydroxyacyl-CoA by addition of water on enoyl-CoA. Also exhibits 3-hydroxyacyl-CoA epimerase and 3-hydroxyacyl-CoA dehydrogenase activities. This chain is Fatty acid oxidation complex subunit alpha, found in Yersinia pestis (strain Pestoides F).